The chain runs to 856 residues: Phosphoenolpyruvate synthase (856 aa).

Catalysis depends on histidine 433, which acts as the Tele-phosphohistidine intermediate. Positions 523, 636, 738, 759, 760, 761, and 762 each coordinate substrate. Glutamate 738 is a Mg(2+) binding site. Position 762 (aspartate 762) interacts with Mg(2+). Residue cysteine 809 is the Proton donor of the active site.

Belongs to the PEP-utilizing enzyme family. The cofactor is Mg(2+).

The enzyme catalyses pyruvate + ATP + H2O = phosphoenolpyruvate + AMP + phosphate + 2 H(+). It functions in the pathway carbohydrate biosynthesis; gluconeogenesis. Its function is as follows. Catalyzes the phosphorylation of pyruvate to phosphoenolpyruvate. The polypeptide is Phosphoenolpyruvate synthase (ppsA) (Aquifex aeolicus (strain VF5)).